A 448-amino-acid chain; its full sequence is MQASDSSINTLDGHQVSAGRDESTPLLANSPQRRSSGGTSFGFAVFNLMNAIMGSGILGLSYAMAKTGILGFSALLLIVALLAAYSIHLLLRMCLLTAVTSYEDLGLYAFGRSGKVLVACTILIQNVGAMSSYLFIIKSELPAAIASFLPGAQGEPWYLDGRTLLIITSVCIVLPLALLPKIGFLGYTSSLSFFFMVYFAVVIVIKKWNIPCPLPPLNHTVTFLQAPNISECKPKLFDFSKESAFALPTMAFSFLCHTSVLPIYCELKSPSKSKMQNVANVGIALSFLIYYISALFGYLTFYDNVKSELLQGYSKYLPKDVLIITVRLCILLAVLLTVPLIHFPARKAVMMMFFSRYPFSYIRHILVTLVLNIIIVLLAIYVPDMRSVFGVVGSTTSTCLLFVFPGLFYVKLGREDCSSPQKFGACGLLVLGICIGACSLTLIIMNLA.

Composition is skewed to polar residues over residues 1–12 (MQASDSSINTLD) and 26–36 (LLANSPQRRSS). A disordered region spans residues 1–36 (MQASDSSINTLDGHQVSAGRDESTPLLANSPQRRSS). A run of 5 helical transmembrane segments spans residues 40-60 (SFGF…ILGL), 69-89 (ILGF…SIHL), 117-137 (LVAC…LFII), 164-184 (LLII…KIGF), and 185-205 (LGYT…VIVI). Cys-212 and Cys-232 are oxidised to a cystine. N-linked (GlcNAc...) asparagine glycosylation is found at Asn-218 and Asn-228. Transmembrane regions (helical) follow at residues 244 to 264 (AFAL…LPIY), 281 to 301 (VGIA…YLTF), 321 to 341 (VLII…VPLI), 365 to 385 (ILVT…VPDM), 388 to 408 (VFGV…PGLF), and 425 to 445 (ACGL…LIIM).

The protein belongs to the amino acid/polyamine transporter 2 family.

The protein localises to the cell membrane. Its function is as follows. Probable sodium-dependent amino acid/proton antiporter, could be a neuronal transporter for glutamate. This chain is Probable sodium-coupled neutral amino acid transporter 6 (slc38a6), found in Xenopus tropicalis (Western clawed frog).